Reading from the N-terminus, the 322-residue chain is Tetraacyldisaccharide 4'-kinase (322 aa).

54–61 (SVGGTGKT) contributes to the ATP binding site.

Belongs to the LpxK family.

The enzyme catalyses a lipid A disaccharide + ATP = a lipid IVA + ADP + H(+). The protein operates within glycolipid biosynthesis; lipid IV(A) biosynthesis; lipid IV(A) from (3R)-3-hydroxytetradecanoyl-[acyl-carrier-protein] and UDP-N-acetyl-alpha-D-glucosamine: step 6/6. In terms of biological role, transfers the gamma-phosphate of ATP to the 4'-position of a tetraacyldisaccharide 1-phosphate intermediate (termed DS-1-P) to form tetraacyldisaccharide 1,4'-bis-phosphate (lipid IVA). The polypeptide is Tetraacyldisaccharide 4'-kinase (Francisella tularensis subsp. holarctica (strain FTNF002-00 / FTA)).